The primary structure comprises 316 residues: Pantothenate kinase (316 aa).

95–102 (GSVAVGKS) lines the ATP pocket.

This sequence belongs to the prokaryotic pantothenate kinase family.

It localises to the cytoplasm. The catalysed reaction is (R)-pantothenate + ATP = (R)-4'-phosphopantothenate + ADP + H(+). It participates in cofactor biosynthesis; coenzyme A biosynthesis; CoA from (R)-pantothenate: step 1/5. This is Pantothenate kinase from Salmonella gallinarum (strain 287/91 / NCTC 13346).